The sequence spans 75 residues: U6-lycotoxin-Ls1d (75 aa).

An N-terminal signal peptide occupies residues 1-21; sequence MKLLFFTALVLVVISLIEVEA. Positions 22 to 25 are excised as a propeptide; that stretch reads ENER.

Belongs to the neurotoxin 19 (CSTX) family. 06 (U6-Lctx) subfamily. Contains 4 disulfide bonds. Expressed by the venom gland.

It localises to the secreted. This is U6-lycotoxin-Ls1d from Lycosa singoriensis (Wolf spider).